Here is a 458-residue protein sequence, read N- to C-terminus: Vitamin K-dependent protein C (458 aa).

Residues 1–27 (IPDDVGYRNQKTASKEGVCVVSKCQDG) form the signal peptide. The propeptide occupies 28 to 36 (PNTLPRAKR). The region spanning 37-82 (ANSFLEELRPSSLERECVEEVCDLEEAKEIFQSVDDTLAFWYKYVD) is the Gla domain. 9 positions are modified to 4-carboxyglutamate: glutamate 42, glutamate 43, glutamate 50, glutamate 52, glutamate 55, glutamate 56, glutamate 61, glutamate 62, and glutamate 65. A disulfide bridge links cysteine 53 with cysteine 58. 4 disulfides stabilise this stretch: cysteine 86–cysteine 105, cysteine 95–cysteine 100, cysteine 99–cysteine 114, and cysteine 116–cysteine 125. EGF-like domains lie at 91-126 (SEHP…SFCQ) and 130-170 (RFSN…LQCE). A (3R)-3-hydroxyaspartate modification is found at aspartate 107. N-linked (GlcNAc...) asparagine glycosylation is present at asparagine 133. Intrachain disulfides connect cysteine 134-cysteine 145, cysteine 141-cysteine 154, cysteine 156-cysteine 169, cysteine 177-cysteine 316, and cysteine 235-cysteine 251. In terms of domain architecture, Peptidase S1 spans 210-447 (IDGKLTRRGD…YLDWIHSHIE (238 aa)). The Charge relay system role is filled by histidine 250. N-linked (GlcNAc...) asparagine glycosylation is present at asparagine 287. The active-site Charge relay system is aspartate 296. A glycan (N-linked (GlcNAc...) asparagine) is linked at asparagine 352. 2 disulfide bridges follow: cysteine 370/cysteine 384 and cysteine 395/cysteine 423. Serine 399 (charge relay system) is an active-site residue.

It belongs to the peptidase S1 family. In terms of assembly, synthesized as a single chain precursor, which is cleaved into a light chain and a heavy chain held together by a disulfide bond. The enzyme is then activated by thrombin, which cleaves a tetradecapeptide from the amino end of the heavy chain; this reaction, which occurs at the surface of endothelial cells, is strongly promoted by thrombomodulin. Post-translationally, the vitamin K-dependent, enzymatic carboxylation of some Glu residues allows the modified protein to bind calcium. The iron and 2-oxoglutarate dependent 3-hydroxylation of aspartate and asparagine is (R) stereospecific within EGF domains. In terms of tissue distribution, plasma; synthesized in the liver.

The protein resides in the secreted. Its subcellular location is the golgi apparatus. It localises to the endoplasmic reticulum. It carries out the reaction Degradation of blood coagulation factors Va and VIIIa.. Its function is as follows. Protein C is a vitamin K-dependent serine protease that regulates blood coagulation by inactivating factors Va and VIIIa in the presence of calcium ions and phospholipids. Exerts a protective effect on the endothelial cell barrier function. The chain is Vitamin K-dependent protein C (PROC) from Oryctolagus cuniculus (Rabbit).